An 81-amino-acid polypeptide reads, in one-letter code: Sec-independent protein translocase protein TatA (81 aa).

The chain crosses the membrane as a helical span at residues 1-21 (MGGISVWQLLIIAVIVVLLFG). The interval 42–81 (AMSDEDSAKNEKDADFEPKSLEKQQQKEAAPETKKDKEQA) is disordered.

The protein belongs to the TatA/E family. As to quaternary structure, the Tat system comprises two distinct complexes: a TatABC complex, containing multiple copies of TatA, TatB and TatC subunits, and a separate TatA complex, containing only TatA subunits. Substrates initially bind to the TatABC complex, which probably triggers association of the separate TatA complex to form the active translocon.

The protein resides in the cell inner membrane. In terms of biological role, part of the twin-arginine translocation (Tat) system that transports large folded proteins containing a characteristic twin-arginine motif in their signal peptide across membranes. TatA could form the protein-conducting channel of the Tat system. The polypeptide is Sec-independent protein translocase protein TatA (Vibrio parahaemolyticus serotype O3:K6 (strain RIMD 2210633)).